A 124-amino-acid polypeptide reads, in one-letter code: Large ribosomal subunit protein bL17 (124 aa).

It belongs to the bacterial ribosomal protein bL17 family. In terms of assembly, part of the 50S ribosomal subunit. Contacts protein L32.

This is Large ribosomal subunit protein bL17 from Acidithiobacillus ferrooxidans (strain ATCC 23270 / DSM 14882 / CIP 104768 / NCIMB 8455) (Ferrobacillus ferrooxidans (strain ATCC 23270)).